The primary structure comprises 122 residues: Large ribosomal subunit protein uL18 (122 aa).

It belongs to the universal ribosomal protein uL18 family. In terms of assembly, part of the 50S ribosomal subunit; part of the 5S rRNA/L5/L18/L25 subcomplex. Contacts the 5S and 23S rRNAs.

Functionally, this is one of the proteins that bind and probably mediate the attachment of the 5S RNA into the large ribosomal subunit, where it forms part of the central protuberance. This is Large ribosomal subunit protein uL18 from Citrifermentans bemidjiense (strain ATCC BAA-1014 / DSM 16622 / JCM 12645 / Bem) (Geobacter bemidjiensis).